Here is a 316-residue protein sequence, read N- to C-terminus: Serpentine receptor class gamma-8 (316 aa).

Transmembrane regions (helical) follow at residues 28 to 48, 60 to 80, 106 to 126, 147 to 167, 186 to 206, 235 to 255, and 267 to 287; these read FVQVAYLAPAVFLYSRILYVV, PFFMVYSMVGLILVLLDIFIT, LYYPLLNYLHCAQPFIQIFLT, FSRILILNLIAPFFFIWNTII, IIPWASMSLFLFIIRSAVVMI, ACAANSICFLVPAVFEAMKVL, and LVQPFAWDVLNVGSPLVMIFA.

Belongs to the nematode receptor-like protein srg family.

It is found in the membrane. The polypeptide is Serpentine receptor class gamma-8 (srg-8) (Caenorhabditis elegans).